We begin with the raw amino-acid sequence, 720 residues long: MACVLEPPLRMSVLSEVTASSRHYVDRLFDPDPQKVLQGVIDMKNAVIGNNKQKANLIVLGAVPRLLYLLQQETSSTELKTECAVVLGSLSMGTENNVKSLLDCNIIPALLQGLLSSDLQFIEACLRCLRTVFTSPVTPVELLYTDASVIPHLMLLLSRSIYAQEYICQIYAHCCKGPDHQTILFNHGVVQNIAHLLTSVSYKVRMQALKCFSVLAFDNPQVSMTLANVLVDGELLPQIFAKMLQRDKPIEMQLTAAKCLTYMCRAGSIRTDDNCIVLKTLPCLVRMCSKERLLEVRVEGAETLAYLIEPDVELQRIASITDHLISMLADYFKYPSSVSAITDIKRHQETGQPCIDPEEAEPRGTRDESQCTALSISHPVSQIQHDCLLTSEELDHDLKHAHELRQAAFKLYASLGANDEDIRKKIIEAEHMMDRIVNGLSETSVKVRLAAVRCLHSLSRSVQQLRTSFQDHAVWKPLMKVLQNAPDDILVVASSTLCNLLLEFSPSKEPILESGAVELLCSLTLSENPALRVNGIWALMNMAFQADQKIKSDILRGLSTEQLFQLLSDSDVNVLMKTLGLLRNLLSTRPHIDQIMSTHGKQIMQAVTFILEGEHNIEVKEQTLCILANIADGTTAKDLIMTNDDILQKIKYYVGHSNLKLQLAAMFCIANLTWNEEEGSQERQDKLREIGIVDILHKLSQSTDPNLCDKAKTALQQYFA.

14 ARM repeats span residues 51–92 (NKQK…SLSM), 95–134 (ENNV…TVFT), 138–176 (TPVE…HCCK), 178–217 (PDHQ…VLAF), 224–265 (MTLA…YMCR), 269–309 (IRTD…YLIE), 313–352 (ELQR…ETGQ), 421–460 (DIRK…SLSR), 463–502 (QQLR…NLLL), 505–544 (SPSK…NMAF), 548–587 (QKIK…NLLS), 590–632 (PHID…NIAD), 635–674 (TAKD…NLTW), and 681–720 (QERQ…QYFA).

Identified in the CTLH complex that contains at least MAEA, RMND5A (or alternatively its paralog RMND5B), GID8, WDR26, and RANBP9 and/or RANBP10; ARMC8 has an ancillary role in the complex.

The protein localises to the nucleus. It is found in the cytoplasm. Functionally, component of the CTLH E3 ubiquitin-protein ligase complex that mediates ubiquitination and subsequent proteasomal degradation of target proteins. This Xenopus laevis (African clawed frog) protein is Armadillo repeat-containing protein 8 (armc8).